Reading from the N-terminus, the 219-residue chain is Ribose-5-phosphate isomerase A (219 aa).

Substrate-binding positions include 29–32 (TGST), 82–85 (DGAD), and 95–98 (KGGG). The active-site Proton acceptor is the E104. Substrate is bound at residue K122.

This sequence belongs to the ribose 5-phosphate isomerase family. As to quaternary structure, homodimer.

It carries out the reaction aldehydo-D-ribose 5-phosphate = D-ribulose 5-phosphate. The protein operates within carbohydrate degradation; pentose phosphate pathway; D-ribose 5-phosphate from D-ribulose 5-phosphate (non-oxidative stage): step 1/1. Functionally, catalyzes the reversible conversion of ribose-5-phosphate to ribulose 5-phosphate. In Chromobacterium violaceum (strain ATCC 12472 / DSM 30191 / JCM 1249 / CCUG 213 / NBRC 12614 / NCIMB 9131 / NCTC 9757 / MK), this protein is Ribose-5-phosphate isomerase A.